Reading from the N-terminus, the 541-residue chain is MSKYSGEEFSNNGDFYDDFAHTGDPALDMEYERNYYASRMPENVKYFLMNFCQAVKEGNLYDIQNMYENTFPQISDHHFDKSSWPEETEVGALVENDKVFMILYKELYYRHIHARIPGGPKLDQRINSFFNYCDFFNLIISAPNPVMLELPDIWLWELVDEFVYQFQNFAQYRARLTDKSQEEIQQLCVNHSNVWSILCILNVLHSLVDISNIKKQLEAISGGIDPNTVSGDFGKLSFYKMLGYFSLVDLLRVHSLLGDYYQAIKVLEPIEIHKKSAYSHIPACQISTSYYVGFAYMMMRRYADAIRTFSDILLYIQRTKQLYSTRSYQNDQINKQAEQMYHLLAICLVLHPQCIDESIQQVLREKNYHDAMFKMQCGDLEVFKSFFVFACPRFVSPCPPAADAPMEDYVKDPMEHQLQVFMDEVRQQKDLPTTRSYLKLYTTLPLAKLASFIDPNANDDDVSKLLIRLLCFKHKMRNLVWSKGPSGLEGTFKSGSELDFYIDDDMIHIADTKVSHRYGDFFVRKILKFNDLNRKLKNINI.

The 209-residue stretch at T308–H516 folds into the PCI domain.

This sequence belongs to the eIF-3 subunit L family. As to quaternary structure, component of the eukaryotic translation initiation factor 3 (eIF-3) complex. The eIF-3 complex interacts with pix.

It localises to the cytoplasm. Its function is as follows. Component of the eukaryotic translation initiation factor 3 (eIF-3) complex, which is involved in protein synthesis of a specialized repertoire of mRNAs and, together with other initiation factors, stimulates binding of mRNA and methionyl-tRNAi to the 40S ribosome. The eIF-3 complex specifically targets and initiates translation of a subset of mRNAs involved in cell proliferation. In Drosophila persimilis (Fruit fly), this protein is Eukaryotic translation initiation factor 3 subunit L.